The chain runs to 561 residues: Dihydroxy-acid dehydratase (561 aa).

[2Fe-2S] cluster is bound at residue cysteine 50. Aspartate 82 contributes to the Mg(2+) binding site. [2Fe-2S] cluster is bound at residue cysteine 123. Residues aspartate 124 and lysine 125 each coordinate Mg(2+). Position 125 is an N6-carboxylysine (lysine 125). Cysteine 195 serves as a coordination point for [2Fe-2S] cluster. Glutamate 447 provides a ligand contact to Mg(2+). Residue serine 473 is the Proton acceptor of the active site.

It belongs to the IlvD/Edd family. As to quaternary structure, homodimer. [2Fe-2S] cluster is required as a cofactor. Mg(2+) serves as cofactor.

It carries out the reaction (2R)-2,3-dihydroxy-3-methylbutanoate = 3-methyl-2-oxobutanoate + H2O. The catalysed reaction is (2R,3R)-2,3-dihydroxy-3-methylpentanoate = (S)-3-methyl-2-oxopentanoate + H2O. Its pathway is amino-acid biosynthesis; L-isoleucine biosynthesis; L-isoleucine from 2-oxobutanoate: step 3/4. It functions in the pathway amino-acid biosynthesis; L-valine biosynthesis; L-valine from pyruvate: step 3/4. Functionally, functions in the biosynthesis of branched-chain amino acids. Catalyzes the dehydration of (2R,3R)-2,3-dihydroxy-3-methylpentanoate (2,3-dihydroxy-3-methylvalerate) into 2-oxo-3-methylpentanoate (2-oxo-3-methylvalerate) and of (2R)-2,3-dihydroxy-3-methylbutanoate (2,3-dihydroxyisovalerate) into 2-oxo-3-methylbutanoate (2-oxoisovalerate), the penultimate precursor to L-isoleucine and L-valine, respectively. The chain is Dihydroxy-acid dehydratase from Chloroflexus aurantiacus (strain ATCC 29366 / DSM 635 / J-10-fl).